The primary structure comprises 929 residues: Diacylglycerol kinase zeta (929 aa).

Residues 1–14 (MEPRDPSPEARSSD) show a composition bias toward basic and acidic residues. Disordered stretches follow at residues 1–46 (MEPR…RRFP) and 59–80 (KSGL…GESE). Low complexity predominate over residues 15-24 (SESASASSSG). A compositionally biased stretch (basic and acidic residues) spans 25–37 (SERDADPEPDKAP). 2 consecutive Phorbol-ester/DAG-type zinc fingers follow at residues 98–153 (HIWF…NFRC) and 173–231 (HHWV…EEPC). Residues 257–281 (KASKKKKRASFKRRSSKKGPEEGRW) are disordered. Over residues 258–273 (ASKKKKRASFKRRSSK) the composition is skewed to basic residues. The tract at residues 279-417 (GRWRPFIIRP…HVEEGNVVQL (139 aa)) is mediates interaction with RASGRP1. The DAGKc domain occupies 292-426 (PLMKPLLVFV…LDRWDLRAEP (135 aa)). A Nuclear export signal motif is present at residues 362 to 370 (LSTLDQLRL). The tract at residues 421–441 (DLRAEPNPEAGPEERDDGATD) is disordered. S706 carries the phosphoserine modification. The interval 760–783 (ARPDLPTPTSPLPASPCSPTPGSL) is disordered. Residues 764–778 (LPTPTSPLPASPCSP) are compositionally biased toward pro residues. At S782 the chain carries Phosphoserine. 2 ANK repeats span residues 823-853 (QSRT…EILD) and 858-887 (NGET…SLMK). Positions 925-929 (QETAV) match the PDZ-binding motif.

It belongs to the eukaryotic diacylglycerol kinase family. As to quaternary structure, interacts (via PDZ-binding motif) with the PDZ domain of the syntrophin SNTG1 and that of SNX27. Interacts with IRS1 in the absence of insulin; insulin stimulation decreases this interaction. Found in a ternary complex with IRS1 and PIP5K1A in the absence of insulin. Interacts with PIP5K1A. Forms a signaling complex with RASGRP1 and HRAS.

It localises to the nucleus. It is found in the cytoplasm. Its subcellular location is the cytosol. The protein resides in the cell membrane. The protein localises to the cell projection. It localises to the lamellipodium. It catalyses the reaction a 1,2-diacyl-sn-glycerol + ATP = a 1,2-diacyl-sn-glycero-3-phosphate + ADP + H(+). It carries out the reaction a 1-O-alkyl-sn-glycerol + ATP = a 1-O-alkyl-sn-glycero-3-phosphate + ADP + H(+). The catalysed reaction is 1-O-alkyl-2-acyl-sn-glycerol + ATP = 1-O-alkyl-2-acyl-sn-glycero-3-phosphate + ADP + H(+). The enzyme catalyses 1,2-didecanoyl-sn-glycerol + ATP = 1,2-didecanoyl-sn-glycero-3-phosphate + ADP + H(+). It catalyses the reaction 1,2-ditetradecanoyl-sn-glycerol + ATP = 1,2-ditetradecanoyl-sn-glycero-3-phosphate + ADP + H(+). It carries out the reaction 1-hexadecanoyl-2-(9Z-octadecenoyl)-sn-glycerol + ATP = 1-hexadecanoyl-2-(9Z-octadecenoyl)-sn-glycero-3-phosphate + ADP + H(+). The catalysed reaction is 1-hexadecanoyl-2-(5Z,8Z,11Z,14Z-eicosatetraenoyl)-sn-glycerol + ATP = 1-hexadecanoyl-2-(5Z,8Z,11Z,14Z-eicosatetraenoyl)-sn-glycero-3-phosphate + ADP + H(+). The enzyme catalyses 1-octadecanoyl-2-(9Z-octadecenoyl)-sn-glycerol + ATP = 1-octadecanoyl-2-(9Z-octadecenoyl)-sn-glycero-3-phosphate + ADP + H(+). It catalyses the reaction 1-octadecanoyl-2-(5Z,8Z,11Z,14Z-eicosatetraenoyl)-sn-glycerol + ATP = 1-octadecanoyl-2-(5Z,8Z,11Z,14Z-eicosatetraenoyl)-sn-glycero-3-phosphate + ADP + H(+). It carries out the reaction 1-octadecanoyl-2-(4Z,7Z,10Z,13Z,16Z,19Z-docosahexaenoyl)-sn-glycerol + ATP = 1-octadecanoyl-2-(4Z,7Z,10Z,13Z,16Z,19Z-docosahexaenoyl)-sn-glycero-3-phosphate + ADP + H(+). The catalysed reaction is 1,2-di-(9Z-octadecenoyl)-sn-glycerol + ATP = 1,2-di-(9Z-octadecenoyl)-sn-glycero-3-phosphate + ADP + H(+). The enzyme catalyses 1-(9Z-octadecenoyl)-2-hexadecanoyl-sn-glycerol + ATP = 1-(9Z)-octadecenoyl-2-hexadecanoyl-sn-glycero-3-phosphate + ADP + H(+). It catalyses the reaction 1-eicosanoyl-2-(5Z,8Z,11Z,14Z)-eicosatetraenoyl-sn-glycerol + ATP = 1-eicosanoyl-2-(5Z,8Z,11Z,14Z)-eicosatetraenoyl-sn-glycero-3-phosphate + ADP + H(+). It carries out the reaction 1,2-di-(5Z,8Z,11Z,14Z)-eicosatetraenoyl-sn-glycerol + ATP = 1,2-di-(5Z,8Z,11Z,14Z)-eicosatetraenoyl-sn-glycero-3-phosphate + ADP + H(+). The catalysed reaction is 1-O-hexadecyl-2-acetyl-sn-glycerol + ATP = 1-O-hexadecyl-2-acetyl-sn-glycero-3-phosphate + ADP + H(+). The enzyme catalyses 1-O-hexadecyl-2-(5Z,8Z,11Z,14Z-eicosatetraenoyl)-sn-glycerol + ATP = 1-O-hexadecyl-2-(5Z,8Z,11Z,14Z-eicosatetraenoyl)-sn-glycero-3-phosphate + ADP + H(+). It catalyses the reaction 1-O-hexadecyl-2-(9Z-octadecenoyl)-sn-glycerol + ATP = 1-O-hexadecyl-2-(9Z-octadecenoyl)-sn-glycero-3-phosphate + ADP + H(+). It carries out the reaction 1-O-hexadecyl-sn-glycerol + ATP = 1-O-hexadecyl-sn-glycero-3-phosphate + ADP + H(+). It participates in lipid metabolism; glycerolipid metabolism. Diacylglycerol kinase that converts diacylglycerol/DAG into phosphatidic acid/phosphatidate/PA and regulates the respective levels of these two bioactive lipids. Thereby, acts as a central switch between the signaling pathways activated by these second messengers with different cellular targets and opposite effects in numerous biological processes. Also plays an important role in the biosynthesis of complex lipids. Does not exhibit an acyl chain-dependent substrate specificity among diacylglycerol species. Can also phosphorylate 1-alkyl-2-acylglycerol in vitro but less efficiently and with a preference for alkylacylglycerols containing an arachidonoyl group. The biological processes it is involved in include T cell activation since it negatively regulates T-cell receptor signaling which is in part mediated by diacylglycerol. By generating phosphatidic acid, stimulates PIP5KIA activity which regulates actin polymerization. Through the same mechanism could also positively regulate insulin-induced translocation of SLC2A4 to the cell membrane. Regulates RASGRP1 activity. The protein is Diacylglycerol kinase zeta of Rattus norvegicus (Rat).